Reading from the N-terminus, the 320-residue chain is uncharacterized protein (320 aa).

The protein belongs to the anthranilate phosphoribosyltransferase family.

This is an uncharacterized protein from Escherichia coli (strain K12).